The primary structure comprises 246 residues: MQALLFLMALLLPSGAGAEEIIGGVESRPHSRPYMAHLEITTERGFTATCGGFLITRQFVMTAAHCSGREITVTLGAHDVSKTESTQQKIKVEKQIVHPKYNFYSNLHDIMLLKLQKKAKETPSVNVIPLPRPSDFIKPGKMCRAAGWGRTGVTEPTSDTLREVKLRIMDKEACKNYWHYDYNLQVCVGSPRKKRSAYKGDSGGPLLCAGVAHGIVSYGRGDAKPPAVFTRISSYVPWINRVIKGE.

A signal peptide spans 1–18; the sequence is MQALLFLMALLLPSGAGA. A propeptide spans 19-20 (activation peptide); the sequence is EE. A Peptidase S1 domain is found at 21 to 244; that stretch reads IIGGVESRPH…YVPWINRVIK (224 aa). Cys-50 and Cys-66 are joined by a disulfide. Active-site charge relay system residues include His-65 and Asp-109. Disulfide bonds link Cys-143–Cys-208 and Cys-174–Cys-187. The Charge relay system role is filled by Ser-202.

This sequence belongs to the peptidase S1 family. Granzyme subfamily. As to quaternary structure, monomer. Interacts with iripin-2, a serine protease inhibitor from Ixodes ricinus saliva. In terms of tissue distribution, submucosal mast cells. In femoral muscle, detected in myocytes but not in mast cells.

Its activity is regulated as follows. Completely inhibited by serine protease inhibitors such as chymostatin, diisopropylfluorophosphate and phenylmethylsulfonyl fluoride, but not by p-tosyl-L-phenylalanine chloromethyl ketone, p-tosyl-L-lysine chloromethyl ketone, pepstatin, E-64, EDTA or o-phenanthroline. Also inhibited by lima bean trypsin inhibitor, soy bean trypsin inhibitor and human plasma alpha1-antichymotrypsin. Functionally, has chymotrypsin-like activity. Hydrolyzes the amide bonds of synthetic substrates having Tyr and Phe residues at the P1 position. Preferentially hydrolyzes the 'Tyr-4-|-Ile-5' bond of angiotensin I and the 'Phe-20-|-Ala-21' bond of amyloid beta-protein, and is less active towards the 'Phe-8-|-His-9' bond of angiotensin I and the 'Phe-4-|-Ala-5' and 'Tyr-10-|-Glu-11' bonds of amyloid beta-protein. Involved in thrombin regulation and fibronectin processing. This Mus musculus (Mouse) protein is Mast cell protease 4 (Mcpt4).